A 474-amino-acid polypeptide reads, in one-letter code: Gamma-aminobutyric acid receptor subunit gamma-2 (474 aa).

The signal sequence occupies residues 1–38 (MSSPNTWSIGSSVYSPVFSQKMTLWILLLLSLYPGFTS). Topologically, residues 39-274 (QKSDDDYEDY…FDLSRRMGYF (236 aa)) are extracellular. 2 N-linked (GlcNAc...) asparagine glycosylation sites follow: asparagine 51 and asparagine 128. Cysteine 189 and cysteine 203 form a disulfide bridge. Asparagine 246 carries an N-linked (GlcNAc...) asparagine glycan. The helical transmembrane segment at 275–295 (TIQTYIPCTLIVVLSWVSFWI) threads the bilayer. Over 296 to 301 (NKDAVP) the chain is Cytoplasmic. A helical transmembrane segment spans residues 302 to 321 (ARTSLGITTVLTMTTLSTIA). The Extracellular segment spans residues 322–333 (RKSLPKVSYVTA). A helical membrane pass occupies residues 334 to 358 (MDLFVSVCFIFVFSALVEYGTLHYF). Residues 359–450 (VSNRKPSKDK…IHIRIAKMDS (92 aa)) lie on the Cytoplasmic side of the membrane. At serine 381 the chain carries Phosphoserine; by PKC. Residues 451 to 472 (YARIFFPTAFCLFNLVYWVSYL) traverse the membrane as a helical segment. Residues 473-474 (YL) lie on the Extracellular side of the membrane.

The protein belongs to the ligand-gated ion channel (TC 1.A.9) family. Gamma-aminobutyric acid receptor (TC 1.A.9.5) subfamily. GABRG2 sub-subfamily. As to quaternary structure, heteropentamer, formed by a combination of alpha (GABRA1-6), beta (GABRB1-3), gamma (GABRG1-3), delta (GABRD), epsilon (GABRE), rho (GABRR1-3), pi (GABRP) and theta (GABRQ) chains, each subunit exhibiting distinct physiological and pharmacological properties. Interacts with GABARAP. Interacts with KIF21B. Identified in a complex of 720 kDa composed of LHFPL4, NLGN2, GABRA1, GABRB2, GABRG2 and GABRB3. Interacts with LHFPL4. Interacts with SHISA7; interaction leads to the regulation of GABA(A) receptor trafficking, channel deactivation kinetics and pharmacology. Post-translationally, glycosylated. Palmitoylated by ZDHHC3/GODZ; required for the accumulation of GABA(A) receptors at the postsynaptic membrane of inhibitory GABAergic synapses. As to expression, expressed in brain neurons (at protein level).

Its subcellular location is the postsynaptic cell membrane. The protein localises to the cell membrane. The protein resides in the cell projection. It localises to the dendrite. It is found in the cytoplasmic vesicle membrane. The catalysed reaction is chloride(in) = chloride(out). Its activity is regulated as follows. Allosterically activated by benzodiazepines. Activated by pentobarbital. Inhibited by the antagonist bicuculline. Inhibited by zinc ions. Potentiated by histamine. Its function is as follows. Gamma subunit of the heteropentameric ligand-gated chloride channel gated by gamma-aminobutyric acid (GABA), a major inhibitory neurotransmitter in the brain. GABA-gated chloride channels, also named GABA(A) receptors (GABAAR), consist of five subunits arranged around a central pore and contain GABA active binding site(s) located at the alpha and beta subunit interface(s). When activated by GABA, GABAARs selectively allow the flow of chloride anions across the cell membrane down their electrochemical gradient. Gamma-2/GABRG2-containing GABAARs are found at both synaptic and extrasynaptic sites. Chloride influx into the postsynaptic neuron following GABAAR opening decreases the neuron ability to generate a new action potential, thereby reducing nerve transmission. GABAARs containing alpha-1 and beta-2 or -3 subunits exhibit synaptogenic activity; the gamma-2 subunit being necessary but not sufficient to induce rapid synaptic contacts formation. Extrasynaptic gamma-2-containing receptors contribute to the tonic GABAergic inhibition. GABAARs function also as histamine receptor where histamine binds at the interface of two neighboring beta subunits and potentiates GABA response in a gamma-2 subunit-controlled manner. This Mus musculus (Mouse) protein is Gamma-aminobutyric acid receptor subunit gamma-2.